We begin with the raw amino-acid sequence, 739 residues long: Prestin (739 aa).

At 1-76 (MEHVTVSEEP…PILTWLPSYP (76 aa)) the chain is on the cytoplasmic side. The helical transmembrane segment at 77-106 (LKEYLFGDIVSGISTGVMQLPQGLAYAMLA) threads the bilayer. The Extracellular portion of the chain corresponds to 107 to 109 (AVP). A helical transmembrane segment spans residues 110–127 (PVFGLYSSFYPVLLYTFF). At 128–138 (GTSKHISIGTF) the chain is on the cytoplasmic side. A helical membrane pass occupies residues 139–152 (AVISLMIGGVAVRE). At 153-169 (APDSMFMVNGTNSSLVV) the chain is on the extracellular side. N-linked (GlcNAc...) asparagine glycans are attached at residues N161 and N164. The chain crosses the membrane as a helical span at residues 170–199 (NIEARDSRRVEVVVALTTLVGIIQFVLGLL). The Cytoplasmic segment spans residues 200-209 (RFGFLAIYLT). A helical transmembrane segment spans residues 210–233 (EPLVRGFTTAAAVHVSVSQLKYLL). At 234 to 244 (GVKTARFNGPL) the chain is on the extracellular side. The helical intramembrane region spans 245-256 (SVVYSLDAVLRN). Over 257–261 (IADTN) the chain is Extracellular. Residues 262–285 (IVTLIIGLGCTVFLYIIKQLNERF) traverse the membrane as a helical segment. Topologically, residues 286–294 (KKKLLIPIP) are cytoplasmic. The helical transmembrane segment at 295–310 (GEIIVVIVSTGISYGM) threads the bilayer. Residues 311–335 (LMSENYGVDVVGKIPTGLLPPKVPD) lie on the Extracellular side of the membrane. A helical transmembrane segment spans residues 336–370 (FSVFPNLFADAVPIAVVGFSITISLAKTFALKYGY). The Cytoplasmic segment spans residues 371-373 (SVD). Residues 374–391 (GNQELIALGLCNFVSSFF) form a helical membrane-spanning segment. The Extracellular portion of the chain corresponds to 392–399 (HTFVVTAS). A helical transmembrane segment spans residues 400–409 (MSRSLVQEST). S401 is a salicylate binding site. At 410-413 (GGHT) the chain is on the cytoplasmic side. Residues 414 to 435 (EIAGLLASLLVLLVVVAIGFVF) form a helical membrane-spanning segment. Over 436-439 (QPLP) the chain is Extracellular. The helical transmembrane segment at 440–467 (TTVLAAIIMVNLLGMFKQTRDIPVLWRK) threads the bilayer. S468 is a topological domain (cytoplasmic). A helical transmembrane segment spans residues 469–484 (KIELAIWLVSFFASVL). Residues 485–486 (LG) lie on the Extracellular side of the membrane. The helical transmembrane segment at 487 to 507 (LDYGLAVAMAFAILTVIYRTQ) threads the bilayer. Residues 508 to 731 (RPKNVVLGQI…AVLQCKRWRD (224 aa)) form an extended region for STAS domain region. At 508–739 (RPKNVVLGQI…RDLPVHPNIH (232 aa)) the chain is on the cytoplasmic side. In terms of domain architecture, STAS spans 528–726 (EYEEAEECSG…PTIHDAVLQC (199 aa)).

Belongs to the SLC26A/SulP transporter (TC 2.A.53) family. Homodimer. Interacts (via STAS domain) with CALM; this interaction is calcium-dependent. In terms of tissue distribution, expressed in hair cells of the auditory organs.

It is found in the cell membrane. The catalysed reaction is oxalate(in) + chloride(out) = oxalate(out) + chloride(in). It catalyses the reaction sulfate(out) + chloride(in) = sulfate(in) + chloride(out). Its activity is regulated as follows. Sulfate/chloride antiport activity is inhibited by salicylate; this inhibition is reversible. In terms of biological role, electrogenic antiporter that exchanges sulfate or oxalate for chloride ion in a strictly coupled manner with a 1:1 stoichiometry. Adopts a dynamic conformation, which alternates between the exposure of the central binding site to the extra- and intracellular solutions leading to an inward-to-outward conformational transition during the transport cycle. Generates voltage-dependent charge movements resembling to the non-linear capacitance (NLC) of the cell membrane, but which are not associated to electromotile activity. The chain is Prestin from Danio rerio (Zebrafish).